The following is a 276-amino-acid chain: Glutamate 5-kinase (276 aa).

Lysine 14 is a binding site for ATP. Residues serine 54, aspartate 141, and asparagine 157 each coordinate substrate. ATP contacts are provided by residues 177-178 (SD) and 219-225 (TGGMLTK).

Belongs to the glutamate 5-kinase family.

The protein resides in the cytoplasm. The catalysed reaction is L-glutamate + ATP = L-glutamyl 5-phosphate + ADP. It participates in amino-acid biosynthesis; L-proline biosynthesis; L-glutamate 5-semialdehyde from L-glutamate: step 1/2. Functionally, catalyzes the transfer of a phosphate group to glutamate to form L-glutamate 5-phosphate. The chain is Glutamate 5-kinase from Listeria innocua serovar 6a (strain ATCC BAA-680 / CLIP 11262).